Here is a 338-residue protein sequence, read N- to C-terminus: Phenylalanine--tRNA ligase alpha subunit (338 aa).

Position 252 (Glu-252) interacts with Mg(2+).

It belongs to the class-II aminoacyl-tRNA synthetase family. Phe-tRNA synthetase alpha subunit type 1 subfamily. Tetramer of two alpha and two beta subunits. It depends on Mg(2+) as a cofactor.

The protein resides in the cytoplasm. It carries out the reaction tRNA(Phe) + L-phenylalanine + ATP = L-phenylalanyl-tRNA(Phe) + AMP + diphosphate + H(+). The polypeptide is Phenylalanine--tRNA ligase alpha subunit (Ectopseudomonas mendocina (strain ymp) (Pseudomonas mendocina)).